A 336-amino-acid polypeptide reads, in one-letter code: Holliday junction branch migration complex subunit RuvB (336 aa).

Positions 1–182 (MAKRMITTEL…FGVVHRLEFY (182 aa)) are large ATPase domain (RuvB-L). ATP contacts are provided by residues L21, R22, G63, K66, T67, T68, 129–131 (EDY), R172, Y182, and R219. T67 serves as a coordination point for Mg(2+). Residues 183-253 (TTEELKEIIT…VARFALDILE (71 aa)) form a small ATPAse domain (RuvB-S) region. The head domain (RuvB-H) stretch occupies residues 256 to 336 (KLGLDHIDRQ…GLPYENKELS (81 aa)). R311 and R316 together coordinate DNA.

This sequence belongs to the RuvB family. Homohexamer. Forms an RuvA(8)-RuvB(12)-Holliday junction (HJ) complex. HJ DNA is sandwiched between 2 RuvA tetramers; dsDNA enters through RuvA and exits via RuvB. An RuvB hexamer assembles on each DNA strand where it exits the tetramer. Each RuvB hexamer is contacted by two RuvA subunits (via domain III) on 2 adjacent RuvB subunits; this complex drives branch migration. In the full resolvosome a probable DNA-RuvA(4)-RuvB(12)-RuvC(2) complex forms which resolves the HJ.

The protein resides in the cytoplasm. It carries out the reaction ATP + H2O = ADP + phosphate + H(+). Its function is as follows. The RuvA-RuvB-RuvC complex processes Holliday junction (HJ) DNA during genetic recombination and DNA repair, while the RuvA-RuvB complex plays an important role in the rescue of blocked DNA replication forks via replication fork reversal (RFR). RuvA specifically binds to HJ cruciform DNA, conferring on it an open structure. The RuvB hexamer acts as an ATP-dependent pump, pulling dsDNA into and through the RuvAB complex. RuvB forms 2 homohexamers on either side of HJ DNA bound by 1 or 2 RuvA tetramers; 4 subunits per hexamer contact DNA at a time. Coordinated motions by a converter formed by DNA-disengaged RuvB subunits stimulates ATP hydrolysis and nucleotide exchange. Immobilization of the converter enables RuvB to convert the ATP-contained energy into a lever motion, pulling 2 nucleotides of DNA out of the RuvA tetramer per ATP hydrolyzed, thus driving DNA branch migration. The RuvB motors rotate together with the DNA substrate, which together with the progressing nucleotide cycle form the mechanistic basis for DNA recombination by continuous HJ branch migration. Branch migration allows RuvC to scan DNA until it finds its consensus sequence, where it cleaves and resolves cruciform DNA. The sequence is that of Holliday junction branch migration complex subunit RuvB from Lachnoclostridium phytofermentans (strain ATCC 700394 / DSM 18823 / ISDg) (Clostridium phytofermentans).